The following is a 1236-amino-acid chain: ABC transporter B family member 9 (1236 aa).

The 288-residue stretch at 33 to 320 (MTVGTIAAAG…TSPSLNAFAA (288 aa)) folds into the ABC transmembrane type-1 1 domain. 6 consecutive transmembrane segments (helical) span residues 38–58 (IAAAGNGLTQPFMTLIFGQLI), 80–100 (FIYLAVYSCVVAFLQVSCWMV), 158–178 (QLLCTFLGGFAIAFYKGPLLA), 179–199 (GVLCSCIPLIVIAGAAMSLIM), 257–277 (ISGFGLGTMLAVIFCSYGLAV), and 288–308 (GYNGGQVINVIFAVLTGGMSL). Residues 355 to 591 (IELKDVYFRY…PEGAYSQLVR (237 aa)) form the ABC transporter 1 domain. 390-397 (GQSGSGKS) contributes to the ATP binding site. N542 carries an N-linked (GlcNAc...) asparagine glycan. Residues 593 to 616 (QEGSKEEATESERPETSLDVERSG) form a disordered region. Positions 594-616 (EGSKEEATESERPETSLDVERSG) are enriched in basic and acidic residues. Residues N631 and N653 are each glycosylated (N-linked (GlcNAc...) asparagine). 6 helical membrane-spanning segments follow: residues 685–705 (VLVLGSIAAMVHGTVFPIFGL), 725–745 (SHFWALIYIALGLTNFVMIPV), 785–805 (SLVGDALALIVQNIATVTTGL), 806–826 (IIAFTANWILALIVLALSPFI), 902–922 (FSFFFLYCINCVCFVSGAGLI), and 927–947 (ATFGEVFKVFFALTIMAIGVS). The ABC transmembrane type-1 2 domain occupies 686 to 958 (LVLGSIAAMV…TSAMAPDSNK (273 aa)). Positions 993–1230 (IEFRHVSFRY…SGGAYASLVT (238 aa)) constitute an ABC transporter 2 domain. Residue 1028–1035 (GESGSGKS) participates in ATP binding. N1082 and N1181 each carry an N-linked (GlcNAc...) asparagine glycan.

It belongs to the ABC transporter superfamily. ABCB family. Multidrug resistance exporter (TC 3.A.1.201) subfamily.

It localises to the membrane. This is ABC transporter B family member 9 (ABCB9) from Arabidopsis thaliana (Mouse-ear cress).